A 1309-amino-acid polypeptide reads, in one-letter code: Tetratricopeptide repeat protein 41 (1309 aa).

TPR repeat units lie at residues 399 to 432 (PQLEMDFLNEDSNVLVFSLLIEVFMAAISLKPCI), 651 to 684 (WIQEKPNGLLYFQHQSLRNAVEHKMLGVTISVRE), 817 to 851 (LTFLLFLWGFLTLLGNRRANNLFSGAAPFLVSVQS), 859 to 892 (LKAQNAIGELYLDIGMMQKGLTYFQKAWSNLLRF), 989 to 1024 (MSYFSSAVLMEFLFSRSQRKQAIEYYKQVIKIKEKA), and 1042 to 1079 (SDTLCKLAGQLLSGDFCHHATMEAVSYLYRSLDLRAAH).

The protein localises to the cytoplasm. The protein is Tetratricopeptide repeat protein 41 of Rattus norvegicus (Rat).